Here is a 1030-residue protein sequence, read N- to C-terminus: Pro-apoptotic serine protease NMA111 (1030 aa).

Residues 1-48 (MNGTTSPIAARSKRKEPPHTVDGRHPKHHRTNGEVAPAADNTPDNQDE) are disordered. Positions 15–24 (KEPPHTVDGR) are enriched in basic and acidic residues. Residues 89-279 (VVSIRFCQTC…LPLDRPLRAL (191 aa)) form a serine protease region. Catalysis depends on charge relay system residues H127, D158, and S240. PDZ domains follow at residues 312 to 384 (PEWE…LRGG) and 880 to 960 (AVSF…LRAM).

Belongs to the peptidase S1C family.

The protein resides in the nucleus. In terms of biological role, nuclear serine protease which mediates apoptosis. The sequence is that of Pro-apoptotic serine protease NMA111 (NMA111) from Chaetomium globosum (strain ATCC 6205 / CBS 148.51 / DSM 1962 / NBRC 6347 / NRRL 1970) (Soil fungus).